The sequence spans 202 residues: Peptidyl-tRNA hydrolase (202 aa).

Y14 serves as a coordination point for tRNA. H19 acts as the Proton acceptor in catalysis. Positions 64, 66, and 112 each coordinate tRNA.

It belongs to the PTH family. In terms of assembly, monomer.

The protein localises to the cytoplasm. The enzyme catalyses an N-acyl-L-alpha-aminoacyl-tRNA + H2O = an N-acyl-L-amino acid + a tRNA + H(+). Its function is as follows. Hydrolyzes ribosome-free peptidyl-tRNAs (with 1 or more amino acids incorporated), which drop off the ribosome during protein synthesis, or as a result of ribosome stalling. Catalyzes the release of premature peptidyl moieties from peptidyl-tRNA molecules trapped in stalled 50S ribosomal subunits, and thus maintains levels of free tRNAs and 50S ribosomes. The protein is Peptidyl-tRNA hydrolase of Xanthobacter autotrophicus (strain ATCC BAA-1158 / Py2).